Consider the following 118-residue polypeptide: Hydrogenase maturation factor HypA (118 aa).

His2 is a Ni(2+) binding site. Zn(2+) contacts are provided by Cys73, Cys76, Cys93, and Cys96.

Belongs to the HypA/HybF family.

Functionally, involved in the maturation of [NiFe] hydrogenases. Required for nickel insertion into the metal center of the hydrogenase. The sequence is that of Hydrogenase maturation factor HypA from Lawsonia intracellularis (strain PHE/MN1-00).